The primary structure comprises 256 residues: Probable aquaporin TIP4-2 (256 aa).

The next 5 helical transmembrane spans lie at 25-45 (AVAGELLFTFLFVFIGVASTI), 59-79 (AVTAAAMAQALVVAVLATAGF), 86-108 (LNPAVTLSLAVGGHITLFRSALY), 146-166 (GVAAEAVFTFTLLLVICATIL), and 178-198 (PLLTGLLVGANTVAGGALTGA). The NPA 1 signature appears at 87-89 (NPA). Positions 201–203 (NPA) match the NPA 2 motif. A helical transmembrane segment spans residues 220-240 (VYWVGPLAGGPLAVVAYELLF).

Belongs to the MIP/aquaporin (TC 1.A.8) family. TIP (TC 1.A.8.10) subfamily. Expressed in roots, leaves and anthers.

It localises to the vacuole membrane. Functionally, aquaporins facilitate the transport of water and small neutral solutes across cell membranes. May be involved in transport from the vacuolar compartment to the cytoplasm. The polypeptide is Probable aquaporin TIP4-2 (TIP4-2) (Oryza sativa subsp. japonica (Rice)).